Consider the following 203-residue polypeptide: Urease accessory protein UreG (203 aa).

13 to 20 (GPVGSGKT) provides a ligand contact to GTP.

Belongs to the SIMIBI class G3E GTPase family. UreG subfamily. In terms of assembly, homodimer. UreD, UreF and UreG form a complex that acts as a GTP-hydrolysis-dependent molecular chaperone, activating the urease apoprotein by helping to assemble the nickel containing metallocenter of UreC. The UreE protein probably delivers the nickel.

It localises to the cytoplasm. Functionally, facilitates the functional incorporation of the urease nickel metallocenter. This process requires GTP hydrolysis, probably effectuated by UreG. The chain is Urease accessory protein UreG from Methylobacillus flagellatus (strain ATCC 51484 / DSM 6875 / VKM B-1610 / KT).